The primary structure comprises 649 residues: tRNA-guanine(15) transglycosylase (649 aa).

Asp88 functions as the Nucleophile in the catalytic mechanism. Substrate-binding residues include Asp123 and Ala194. Residues Cys280, Cys282, and Cys285 each coordinate Zn(2+). Residues 573 to 648 (KYRIVIDSSV…VAATLRGGLK (76 aa)) enclose the PUA domain.

The protein belongs to the archaeosine tRNA-ribosyltransferase family. It depends on Zn(2+) as a cofactor.

It catalyses the reaction guanosine(15) in tRNA + 7-cyano-7-deazaguanine = 7-cyano-7-carbaguanosine(15) in tRNA + guanine. The protein operates within tRNA modification; archaeosine-tRNA biosynthesis. Functionally, exchanges the guanine residue with 7-cyano-7-deazaguanine (preQ0) at position 15 in the dihydrouridine loop (D-loop) of archaeal tRNAs. This chain is tRNA-guanine(15) transglycosylase, found in Methanococcus maripaludis (strain C6 / ATCC BAA-1332).